Reading from the N-terminus, the 358-residue chain is tRNA-specific 2-thiouridylase MnmA (358 aa).

ATP contacts are provided by residues 10–17 (AMSGGVDS) and M36. C105 functions as the Nucleophile in the catalytic mechanism. C105 and C202 are oxidised to a cystine. G129 provides a ligand contact to ATP. The segment at 152-154 (KDQ) is interaction with tRNA. C202 acts as the Cysteine persulfide intermediate in catalysis. The interaction with tRNA stretch occupies residues 308–309 (RY).

Belongs to the MnmA/TRMU family.

The protein resides in the cytoplasm. The catalysed reaction is S-sulfanyl-L-cysteinyl-[protein] + uridine(34) in tRNA + AH2 + ATP = 2-thiouridine(34) in tRNA + L-cysteinyl-[protein] + A + AMP + diphosphate + H(+). Functionally, catalyzes the 2-thiolation of uridine at the wobble position (U34) of tRNA, leading to the formation of s(2)U34. The protein is tRNA-specific 2-thiouridylase MnmA of Magnetococcus marinus (strain ATCC BAA-1437 / JCM 17883 / MC-1).